We begin with the raw amino-acid sequence, 296 residues long: MERKDIATPSRTKALLDQFGFNFKKSLGQNFLVDVNIIHKIIDASEIDDNTGIIEVGPGMGSLTEQLAKRAKKVMSFEIDQRLIPVLKETLAPYDNVTIINEDILKADIGKAVKTYLNDCDKIMVVANLPYYITTPILLNLMQQDIPIDGYVVMMQKEVGERLNAQVGTKAYGSLSIVTQYYTETSKVLTVPKSVFMPPPNVDSIVVKLMQRETPLVSVDDEETFFKLAKAAFAQRRKTINNNYQNFFKDGKKHKESILKWLEQTGIDPKRRGETLSIQDFARLYEEKKNFPELEN.

S-adenosyl-L-methionine-binding residues include Asn30, Leu32, Gly57, Glu78, Asp103, and Asn128.

This sequence belongs to the class I-like SAM-binding methyltransferase superfamily. rRNA adenine N(6)-methyltransferase family. RsmA subfamily.

The protein localises to the cytoplasm. It catalyses the reaction adenosine(1518)/adenosine(1519) in 16S rRNA + 4 S-adenosyl-L-methionine = N(6)-dimethyladenosine(1518)/N(6)-dimethyladenosine(1519) in 16S rRNA + 4 S-adenosyl-L-homocysteine + 4 H(+). In terms of biological role, specifically dimethylates two adjacent adenosines (A1518 and A1519) in the loop of a conserved hairpin near the 3'-end of 16S rRNA in the 30S particle. May play a critical role in biogenesis of 30S subunits. This Staphylococcus haemolyticus (strain JCSC1435) protein is Ribosomal RNA small subunit methyltransferase A.